Reading from the N-terminus, the 113-residue chain is MSLKIRLARAGAKKRPYYHIVIADSRSPRDGRFIEKVGAYNPMLPSDHADRVRLVNERITHWLSQGALPTDRVARFLGNAGLAPKPAYTEQPKKSAPKKRAQERAAAAAAAAA.

A disordered region spans residues 84 to 113; sequence PKPAYTEQPKKSAPKKRAQERAAAAAAAAA.

The protein belongs to the bacterial ribosomal protein bS16 family.

The polypeptide is Small ribosomal subunit protein bS16 (Gluconacetobacter diazotrophicus (strain ATCC 49037 / DSM 5601 / CCUG 37298 / CIP 103539 / LMG 7603 / PAl5)).